The chain runs to 555 residues: Potassium-transporting ATPase potassium-binding subunit (555 aa).

A run of 10 helical transmembrane segments spans residues 2 to 22 (IWVA…PTGI), 60 to 80 (QYAL…YFIF), 130 to 150 (IGIT…VMAF), 173 to 193 (VFLP…VPQT), 246 to 266 (MSNI…PFTY), 278 to 298 (ILFV…TTSE), 374 to 394 (AGFV…GLMV), 412 to 432 (LIAV…ALAL), 483 to 503 (LVMF…AASL), and 525 to 545 (GIFI…MLVL).

This sequence belongs to the KdpA family. As to quaternary structure, the system is composed of three essential subunits: KdpA, KdpB and KdpC.

It localises to the cell membrane. Functionally, part of the high-affinity ATP-driven potassium transport (or Kdp) system, which catalyzes the hydrolysis of ATP coupled with the electrogenic transport of potassium into the cytoplasm. This subunit binds the extracellular potassium ions and delivers the ions to the membrane domain of KdpB through an intramembrane tunnel. This Bacillus thuringiensis subsp. konkukian (strain 97-27) protein is Potassium-transporting ATPase potassium-binding subunit.